The primary structure comprises 239 residues: Tetrahydromethanopterin S-methyltransferase subunit A (239 aa).

The Cytoplasmic portion of the chain corresponds to 1–215 (MADKKAPAAG…EAAMIAKFNS (215 aa)). Position 85 (histidine 85) interacts with 5-hydroxybenzimidazolylcob(I)amide. A helical transmembrane segment spans residues 216 to 238 (GYYNGKIQGIAIGLFLSIVIFSL). Leucine 239 is a topological domain (extracellular).

This sequence belongs to the MtrA family. As to quaternary structure, the complex is composed of 8 subunits; MtrA, MtrB, MtrC, MtrD, MtrE, MtrF, MtrG and MtrH. 5-hydroxybenzimidazolylcob(I)amide is required as a cofactor.

It is found in the cell membrane. The catalysed reaction is 5-methyl-5,6,7,8-tetrahydromethanopterin + coenzyme M + 2 Na(+)(in) = 5,6,7,8-tetrahydromethanopterin + methyl-coenzyme M + 2 Na(+)(out). It functions in the pathway one-carbon metabolism; methanogenesis from CO(2); methyl-coenzyme M from 5,10-methylene-5,6,7,8-tetrahydromethanopterin: step 2/2. Part of a complex that catalyzes the formation of methyl-coenzyme M and tetrahydromethanopterin from coenzyme M and methyl-tetrahydromethanopterin. This is an energy-conserving, sodium-ion translocating step. The sequence is that of Tetrahydromethanopterin S-methyltransferase subunit A from Methanococcus maripaludis (strain DSM 14266 / JCM 13030 / NBRC 101832 / S2 / LL).